The chain runs to 199 residues: ATP-dependent Clp protease proteolytic subunit 2 (199 aa).

Ser-98 functions as the Nucleophile in the catalytic mechanism. The active site involves His-123.

This sequence belongs to the peptidase S14 family. In terms of assembly, fourteen ClpP subunits assemble into 2 heptameric rings which stack back to back to give a disk-like structure with a central cavity, resembling the structure of eukaryotic proteasomes.

The protein resides in the cytoplasm. The enzyme catalyses Hydrolysis of proteins to small peptides in the presence of ATP and magnesium. alpha-casein is the usual test substrate. In the absence of ATP, only oligopeptides shorter than five residues are hydrolyzed (such as succinyl-Leu-Tyr-|-NHMec, and Leu-Tyr-Leu-|-Tyr-Trp, in which cleavage of the -Tyr-|-Leu- and -Tyr-|-Trp bonds also occurs).. In terms of biological role, cleaves peptides in various proteins in a process that requires ATP hydrolysis. Has a chymotrypsin-like activity. Plays a major role in the degradation of misfolded proteins. This chain is ATP-dependent Clp protease proteolytic subunit 2, found in Treponema pallidum (strain Nichols).